The following is a 402-amino-acid chain: E3 ubiquitin-protein ligase MARCHF11 (402 aa).

Over residues 1 to 11 (MSFEGGHGGSR) the composition is skewed to gly residues. A disordered region spans residues 1–161 (MSFEGGHGGS…SGGGDQRAGH (161 aa)). Residues 21 to 56 (EPPPQPPPPPPPTPPPGEPAPVPAAPRYLPPLPASP) are compositionally biased toward pro residues. The span at 111 to 124 (EAAAAKGGPGESEA) shows a compositional bias: low complexity. Residues 162 to 222 (QHQHHQPICK…ELCCYRYHVI (61 aa)) form an RING-CH-type zinc finger. Zn(2+) contacts are provided by Cys170, Cys173, Cys186, Cys188, His196, Cys199, Cys212, and Cys215. 2 consecutive transmembrane segments (helical) span residues 245–265 (MIAV…LLWS) and 278–298 (ILFQ…IGLI). The YXXL motif signature appears at 371–374 (YVLL). Residues 399–402 (VTSV) carry the PDZ-binding motif.

Interacts (YXXL motif) with AP1M1. Interacts (via PDZ-binding motif) with LIN7A. Interacts with unidentified fucose glycoproteins.

The protein localises to the cytoplasmic vesicle membrane. It catalyses the reaction S-ubiquitinyl-[E2 ubiquitin-conjugating enzyme]-L-cysteine + [acceptor protein]-L-lysine = [E2 ubiquitin-conjugating enzyme]-L-cysteine + N(6)-ubiquitinyl-[acceptor protein]-L-lysine.. It functions in the pathway protein modification; protein ubiquitination. In terms of biological role, E3 ubiquitin-protein ligase that mediates polyubiquitination of CD4. E3 ubiquitin ligases accept ubiquitin from an E2 ubiquitin-conjugating enzyme in the form of a thioester and then directly transfer the ubiquitin to targeted substrates. May play a role in ubuquitin-dependent protein sorting in developmenting spermatids. This is E3 ubiquitin-protein ligase MARCHF11 from Homo sapiens (Human).